A 38-amino-acid polypeptide reads, in one-letter code: Photosystem I reaction center subunit IX (38 aa).

Residues 4–24 form a helical membrane-spanning segment; that stretch reads FLTTAPVFSAIWFTLTAGIMI.

This sequence belongs to the PsaJ family.

It is found in the plastid. It localises to the organellar chromatophore thylakoid membrane. Functionally, may help in the organization of the PsaE and PsaF subunits. The sequence is that of Photosystem I reaction center subunit IX from Paulinella chromatophora.